The following is a 185-amino-acid chain: uncharacterized protein (185 aa).

Positions 9–169 constitute an N-acetyltransferase domain; sequence VILELAKESD…NGREDDKPLL (161 aa).

This is an uncharacterized protein from Bacillus subtilis (strain 168).